Here is a 450-residue protein sequence, read N- to C-terminus: Tubulin alpha-3 chain (450 aa).

Gln11 is a binding site for GTP. At Lys40 the chain carries N6-acetyllysine. Positions 71, 140, 144, 145, 179, 206, and 228 each coordinate GTP. A Mg(2+)-binding site is contributed by Glu71. The active site involves Glu254.

It belongs to the tubulin family. Dimer of alpha and beta chains. A typical microtubule is a hollow water-filled tube with an outer diameter of 25 nm and an inner diameter of 15 nM. Alpha-beta heterodimers associate head-to-tail to form protofilaments running lengthwise along the microtubule wall with the beta-tubulin subunit facing the microtubule plus end conferring a structural polarity. Microtubules usually have 13 protofilaments but different protofilament numbers can be found in some organisms and specialized cells. Mg(2+) serves as cofactor. In terms of processing, undergoes a tyrosination/detyrosination cycle, the cyclic removal and re-addition of a C-terminal tyrosine residue by the enzymes tubulin tyrosine carboxypeptidase (TTCP) and tubulin tyrosine ligase (TTL), respectively. Post-translationally, acetylation of alpha chains at Lys-40 stabilizes microtubules and affects affinity and processivity of microtubule motors. This modification has a role in multiple cellular functions, ranging from cell motility, cell cycle progression or cell differentiation to intracellular trafficking and signaling. During the early stages of oogenesis lky/Alpha-tubulin N-acetyltransferase 2 is the main acetyltransferase responsible for Lys-40 acetylation in germline cells while Atat/alpha-tubulin N-acetyltransferase 1 is the main acetyltransferase responsible for Lys-40 acetylation in somatic cells.

It is found in the cytoplasm. Its subcellular location is the cytoskeleton. It carries out the reaction GTP + H2O = GDP + phosphate + H(+). Tubulin is the major constituent of microtubules, a cylinder consisting of laterally associated linear protofilaments composed of alpha- and beta-tubulin heterodimers. Microtubules grow by the addition of GTP-tubulin dimers to the microtubule end, where a stabilizing cap forms. Below the cap, tubulin dimers are in GDP-bound state, owing to GTPase activity of alpha-tubulin. In Drosophila melanogaster (Fruit fly), this protein is Tubulin alpha-3 chain (alphaTub84D).